The primary structure comprises 121 residues: Large ribosomal subunit protein bL20 (121 aa).

The protein belongs to the bacterial ribosomal protein bL20 family.

Binds directly to 23S ribosomal RNA and is necessary for the in vitro assembly process of the 50S ribosomal subunit. It is not involved in the protein synthesizing functions of that subunit. In Ruegeria pomeroyi (strain ATCC 700808 / DSM 15171 / DSS-3) (Silicibacter pomeroyi), this protein is Large ribosomal subunit protein bL20.